The following is a 214-amino-acid chain: Thymidylate kinase (214 aa).

Gly9–Thr16 is an ATP binding site.

It belongs to the thymidylate kinase family.

The catalysed reaction is dTMP + ATP = dTDP + ADP. In terms of biological role, phosphorylation of dTMP to form dTDP in both de novo and salvage pathways of dTTP synthesis. The polypeptide is Thymidylate kinase (Geotalea daltonii (strain DSM 22248 / JCM 15807 / FRC-32) (Geobacter daltonii)).